The following is a 260-amino-acid chain: Potassium inward rectifier (Kir)-like channel 3 (260 aa).

Residues 1-34 (MPMTPSEFKNRLLFGSLPRSSSDPTDLQFTEPNV) form a disordered region. At 1–68 (MPMTPSEFKN…EQSVSKSIAR (68 aa)) the chain is on the cytoplasmic side. Residues 18–31 (PRSSSDPTDLQFTE) are compositionally biased toward polar residues. The chain crosses the membrane as a helical span at residues 69-89 (QALALLVVYLSLGVLIYWLTL). The segment at residues 127 to 146 (DSFCFSVMMVTTVGFGDRAF) is an intramembrane region (pore-forming). Residues 153-173 (FLAAVWLLVSTLAVARAFLFL) form a helical membrane-spanning segment. At 174–260 (ADARADKRNR…LVDLTTATSV (87 aa)) the chain is on the cytoplasmic side. EF-hand domains are found at residues 190-225 (LGES…QMEK) and 229-256 (EDFI…DLTT). Ca(2+) is bound by residues Asp-203, Asp-205, Asp-207, Arg-209, Glu-214, Asp-242, Ser-246, Arg-248, and Asp-253.

Belongs to the two pore domain potassium channel (TC 1.A.1.7) family. In terms of assembly, homotetramer. In terms of tissue distribution, expressed in hydathodes and the vascular tissues of roots, stems, leaves and flowers.

It localises to the vacuole membrane. In terms of biological role, probable calcium-activated potassium channel. The chain is Potassium inward rectifier (Kir)-like channel 3 (KCO3) from Arabidopsis thaliana (Mouse-ear cress).